The primary structure comprises 127 residues: Small ribosomal subunit protein uS13 (127 aa).

The segment at 95–127 (GLPVHGQRTSTNARTRKGPRRAAVKKKGGAKKK) is disordered. A compositionally biased stretch (basic residues) spans 108–127 (RTRKGPRRAAVKKKGGAKKK).

Belongs to the universal ribosomal protein uS13 family. In terms of assembly, part of the 30S ribosomal subunit. Forms a loose heterodimer with protein S19. Forms two bridges to the 50S subunit in the 70S ribosome.

Located at the top of the head of the 30S subunit, it contacts several helices of the 16S rRNA. In the 70S ribosome it contacts the 23S rRNA (bridge B1a) and protein L5 of the 50S subunit (bridge B1b), connecting the 2 subunits; these bridges are implicated in subunit movement. Contacts the tRNAs in the A and P-sites. This Desulfatibacillum aliphaticivorans protein is Small ribosomal subunit protein uS13.